The primary structure comprises 309 residues: Partitioning defective protein 6 (309 aa).

One can recognise a PB1 domain in the interval 14 to 96; that stretch reads TLQVKSKFDS…PLLRLLIQRR (83 aa). The 18-residue stretch at 132–149 folds into the Pseudo-CRIB domain; the sequence is ISNPEDFRQVSAIIDVDI. The region spanning 156–249 is the PDZ domain; the sequence is RVRLCKHGQE…NLIITVKPAN (94 aa). Residues 249–270 show a composition bias toward polar residues; it reads NQRNTLSRGPSQQGTPNASEMS. The segment at 249–309 is disordered; it reads NQRNTLSRGP…DANDSDSGED (61 aa).

This sequence belongs to the PAR6 family. As to quaternary structure, interacts with par-3, required for its peripheral localization, and with cdc-42, required for the activation of a par-3/par-6/pkc-3 complex. In terms of tissue distribution, colocalized with par-3 at all stages in early embryos, at the anterior cortex of the embryo. Patchy expression observed at the periphery after completion of meiosis I and in meiosis II, which on completion of metaphase II, is restricted to the anterior 85% of embryo length; this decreases to 55% in embryos between prophase and telophase of the first mitosis. During the first cleavage, expression is detected in the advancing furrow. Along with pkc-3, is unable to associate with the apical cortex of cells that lack par-3. Transiently coexpressed and colocalized with par-3 and pkc-3, asymmetrically in the developing somatic gonad, including the spermathecal precursor cells of L4 larvae.

It localises to the cytoplasm. The protein resides in the cell membrane. It is found in the cell junction. Its subcellular location is the tight junction. Functionally, necessary for apicobasal and anterior-posterior asymmetries associated with cell adhesion and gastrulation during the first few cell cycles of embryogenesis. Required for localizing/ maintaining par-3 at the cell periphery. Regulates mes-1 expression and/or localization pattern during early embryogenesis. Acts together with par-3 and pkc-3 in maintaining epithelial cell polarity in the distal spermatheca. Plays a role in endosome and Golgi body positioning. The sequence is that of Partitioning defective protein 6 from Caenorhabditis elegans.